The chain runs to 382 residues: MSLDFLPFSRPSIGEDEIAAVEQVLRSGWITTGPKNQELEQRFAERLGCRHAVALSSATGALHVTLLALGIGPGDEVITPSLTWVSTANVITLLGATPVFVDVDRDTLMCSAQAVEAAIGPRTRAIVPVHYAGSTLDLEGLRTVAGRHGIALVEDAAHAVGSEYRGRPVGSRGTAIFSFHAIKNLTCAEGAMFVSDDSALAERVRRLKFHGLGVDAYDRLSHGRKPQAEVIEPGFKYNLADLNAALALVQLKRLDALNARRQALAERYLERLAGLPLAPLGLPAHKQRHAWHLFILRIDAEACGLGRDAFMEALKARGIGSGIHFIASHLHHYYRQRQPRLSLPNSEWNSARLCSIPLFPDMRDDDIERVARAIEEILEKRR.

Lys-183 carries the N6-(pyridoxal phosphate)lysine modification.

It belongs to the DegT/DnrJ/EryC1 family. ArnB subfamily. As to quaternary structure, homodimer. Requires pyridoxal 5'-phosphate as cofactor.

The catalysed reaction is UDP-4-amino-4-deoxy-beta-L-arabinose + 2-oxoglutarate = UDP-beta-L-threo-pentopyranos-4-ulose + L-glutamate. It participates in nucleotide-sugar biosynthesis; UDP-4-deoxy-4-formamido-beta-L-arabinose biosynthesis; UDP-4-deoxy-4-formamido-beta-L-arabinose from UDP-alpha-D-glucuronate: step 2/3. It functions in the pathway bacterial outer membrane biogenesis; lipopolysaccharide biosynthesis. Its function is as follows. Catalyzes the conversion of UDP-4-keto-arabinose (UDP-Ara4O) to UDP-4-amino-4-deoxy-L-arabinose (UDP-L-Ara4N). The modified arabinose is attached to lipid A and is required for resistance to polymyxin and cationic antimicrobial peptides. In Pseudomonas aeruginosa (strain LESB58), this protein is UDP-4-amino-4-deoxy-L-arabinose--oxoglutarate aminotransferase.